A 347-amino-acid polypeptide reads, in one-letter code: MTGIWDVRITDTSLRDGSHHKRHQFIKEEVGAIVAALDAAGVPVIEVTHGDGLGGSSFNYGFSKTPEQELIKLAAQTAKEAKIAFLMLPGVGTKEDIKEAQDNGGSICRIATHCTEADVSIQHFGLARELGLETVGFLMMAHTIAPEKLAAQARIMADAGCQCVYVVDSAGALVLDGVADRVAALVAELGEDAQVGFHGHENLGLGVANSVEAVRAGAKQIDGSVRRFGAGAGNAPVEALIGVFDKIGVKTGIDFFDIADAAEDVVRPAMPAECLLDRNALIMGYSGVYSSFLKHAVRQSERYGVPAHQLLHRAGQRKLIGGQEDQLIDIALEIKREQESGQVASRR.

In terms of domain architecture, Pyruvate carboxyltransferase spans 7–259 (VRITDTSLRD…KTGIDFFDIA (253 aa)). 15 to 16 (RD) contacts substrate. Asp-16 provides a ligand contact to Mn(2+). His-19 (proton acceptor) is an active-site residue. The substrate site is built by Ser-169 and His-198. Positions 198 and 200 each coordinate Mn(2+). Tyr-289 lines the substrate pocket.

This sequence belongs to the 4-hydroxy-2-oxovalerate aldolase family.

The enzyme catalyses (S)-4-hydroxy-2-oxopentanoate = acetaldehyde + pyruvate. The protein is 4-hydroxy-2-oxovalerate aldolase 2 of Mycobacterium marinum (strain ATCC BAA-535 / M).